The following is a 261-amino-acid chain: 4-phosphopantoate--beta-alanine ligase (261 aa).

ATP-binding positions include R17, R39, 181-182 (DL), 187-188 (RS), and 199-200 (NI).

It belongs to the archaeal phosphopantothenate synthetase family. In terms of assembly, homodimer.

The enzyme catalyses (R)-4-phosphopantoate + beta-alanine + ATP = (R)-4'-phosphopantothenate + AMP + diphosphate + H(+). It functions in the pathway cofactor biosynthesis; coenzyme A biosynthesis. In terms of biological role, catalyzes the condensation of (R)-4-phosphopantoate and beta-alanine to 4'-phosphopantothenate in the CoA biosynthesis pathway. The polypeptide is 4-phosphopantoate--beta-alanine ligase (Thermococcus onnurineus (strain NA1)).